A 27-amino-acid polypeptide reads, in one-letter code: Conotoxin Lo6/7b (27 aa).

3 cysteine pairs are disulfide-bonded: C2/C16, C9/C19, and C15/C26. Tyrosine amide is present on Y27.

Expressed by the venom duct.

It localises to the secreted. In terms of biological role, 1 uM of this toxin does not show any effect on voltage-gated sodium and potassium channels. Does not show antibacterial activity on both Gram-negative and Gram-positive bacteria. In Conasprella longurionis (Cone snail), this protein is Conotoxin Lo6/7b.